The sequence spans 334 residues: Deoxyhypusine synthase (334 aa).

NAD(+) is bound by residues serine 73–serine 77, threonine 99–glycine 101, glutamate 105, and aspartate 207. Glutamate 104 to glutamate 105 lines the spermidine pocket. Aspartate 212 and histidine 256 together coordinate spermidine. Residue asparagine 276 to alanine 277 participates in NAD(+) binding. Residues glycine 282–aspartate 284 and glutamate 291–lysine 297 contribute to the spermidine site. The active-site Nucleophile is lysine 297. Aspartate 310–alanine 311 provides a ligand contact to NAD(+).

This sequence belongs to the deoxyhypusine synthase family. NAD(+) is required as a cofactor.

The catalysed reaction is [eIF5A protein]-L-lysine + spermidine = [eIF5A protein]-deoxyhypusine + propane-1,3-diamine. It participates in protein modification; eIF5A hypusination. Catalyzes the NAD-dependent oxidative cleavage of spermidine and the subsequent transfer of the butylamine moiety of spermidine to the epsilon-amino group of a specific lysine residue of the eIF-5A precursor protein to form the intermediate deoxyhypusine residue. This chain is Deoxyhypusine synthase (DYS1), found in Encephalitozoon cuniculi (strain GB-M1) (Microsporidian parasite).